A 191-amino-acid polypeptide reads, in one-letter code: Protein YceI (191 aa).

The first 22 residues, 1–22 (MKKNLLGFTFASLLFTTGSAVA), serve as a signal peptide directing secretion.

It belongs to the UPF0312 family. Type 1 subfamily.

The protein localises to the periplasm. This Salmonella agona (strain SL483) protein is Protein YceI.